The chain runs to 365 residues: 2-aminoethylphosphonate--pyruvate transaminase (365 aa).

K194 carries the post-translational modification N6-(pyridoxal phosphate)lysine.

Belongs to the class-V pyridoxal-phosphate-dependent aminotransferase family. PhnW subfamily. Homodimer. Pyridoxal 5'-phosphate serves as cofactor.

It catalyses the reaction (2-aminoethyl)phosphonate + pyruvate = phosphonoacetaldehyde + L-alanine. Involved in phosphonate degradation. This Bacillus cereus (strain 03BB102) protein is 2-aminoethylphosphonate--pyruvate transaminase.